The chain runs to 217 residues: UPF0193 protein EVG1 (217 aa).

This sequence belongs to the UPF0193 (EVG1) family.

This is UPF0193 protein EVG1 (C22orf23) from Homo sapiens (Human).